Reading from the N-terminus, the 209-residue chain is Glutathione S-transferase 1, isoform C (209 aa).

The region spanning 1 to 80 (MDFYYLPGSA…YLAEKYGKDD (80 aa)) is the GST N-terminal domain. Glutathione contacts are provided by residues S9, 50–52 (HCI), and 64–66 (ESR). One can recognise a GST C-terminal domain in the interval 86–207 (DPQKRAVVNQ…AGIEEFKKYF (122 aa)).

The protein belongs to the GST superfamily. Theta family. In terms of assembly, homodimer.

The enzyme catalyses RX + glutathione = an S-substituted glutathione + a halide anion + H(+). The catalysed reaction is 1,1,1-trichloro-2,2-bis(4-chlorophenyl)ethane = 1,1-dichloro-2,2-bis(4-chlorophenyl)ethylene + chloride + H(+). Its function is as follows. Conjugation of reduced glutathione to a wide number of exogenous and endogenous hydrophobic electrophiles. Has DDT dehydrochlorinase activity. The sequence is that of Glutathione S-transferase 1, isoform C (GstD1) from Anopheles gambiae (African malaria mosquito).